A 336-amino-acid chain; its full sequence is Ethanol acetyltransferase 1 (336 aa).

The N-terminal 14 residues, 1–14 (MFPTRVLRSTLQKL), are a transit peptide targeting the mitochondrion. The region spanning 44–296 (PIVFLHGIFG…VNSSHDILDQ (253 aa)) is the AB hydrolase-1 domain. Active-site charge relay system residues include Ser-117, Asp-141, and His-291.

It belongs to the AB hydrolase superfamily.

Its subcellular location is the mitochondrion. It catalyses the reaction ethanol + acetyl-CoA = ethyl acetate + CoA. The enzyme catalyses acetyl-CoA + H2O = acetate + CoA + H(+). The catalysed reaction is ethyl acetate + H2O = ethanol + acetate + H(+). Alcohol acetyltransferase that catalyzes the synthesis of ethyl acetate from ethanol and acetyl-CoA. Can also function as a thioesterase by hydrolyzing acetyl-CoA in the absence of ethanol, as well as esterase hydrolyzing ethyl acetate. This Cyberlindnera jadinii (strain ATCC 18201 / CBS 1600 / BCRC 20928 / JCM 3617 / NBRC 0987 / NRRL Y-1542) (Torula yeast) protein is Ethanol acetyltransferase 1 (EAT1).